Here is a 430-residue protein sequence, read N- to C-terminus: Adenylosuccinate synthetase (430 aa).

Residues 12–18 (GDEGKGK) and 40–42 (GHT) contribute to the GTP site. Asp13 acts as the Proton acceptor in catalysis. Mg(2+) is bound by residues Asp13 and Gly40. IMP is bound by residues 13–16 (DEGK), 38–41 (NAGH), Thr130, Arg144, Gln224, Thr239, and Arg303. The active-site Proton donor is His41. Position 299–305 (299–305 (TVTGRKR)) interacts with substrate. GTP-binding positions include Arg305, 331 to 333 (KLD), and 413 to 415 (STS).

It belongs to the adenylosuccinate synthetase family. In terms of assembly, homodimer. It depends on Mg(2+) as a cofactor.

It is found in the cytoplasm. It catalyses the reaction IMP + L-aspartate + GTP = N(6)-(1,2-dicarboxyethyl)-AMP + GDP + phosphate + 2 H(+). It functions in the pathway purine metabolism; AMP biosynthesis via de novo pathway; AMP from IMP: step 1/2. Plays an important role in the de novo pathway of purine nucleotide biosynthesis. Catalyzes the first committed step in the biosynthesis of AMP from IMP. This is Adenylosuccinate synthetase from Methylorubrum extorquens (strain CM4 / NCIMB 13688) (Methylobacterium extorquens).